A 143-amino-acid chain; its full sequence is Anti-sigma F factor (143 aa).

Belongs to the anti-sigma-factor family.

It catalyses the reaction L-seryl-[protein] + ATP = O-phospho-L-seryl-[protein] + ADP + H(+). The enzyme catalyses L-threonyl-[protein] + ATP = O-phospho-L-threonyl-[protein] + ADP + H(+). Its function is as follows. Binds to sigma F and blocks its ability to form an RNA polymerase holoenzyme (E-sigma F). Phosphorylates SpoIIAA on a serine residue. This phosphorylation may enable SpoIIAA to act as an anti-anti-sigma factor that counteracts SpoIIAB and thus releases sigma F from inhibition. The protein is Anti-sigma F factor of Thermoanaerobacter pseudethanolicus (strain ATCC 33223 / 39E) (Clostridium thermohydrosulfuricum).